The following is a 95-amino-acid chain: Aspartyl/glutamyl-tRNA(Asn/Gln) amidotransferase subunit C (95 aa).

The protein belongs to the GatC family. In terms of assembly, heterotrimer of A, B and C subunits.

The enzyme catalyses L-glutamyl-tRNA(Gln) + L-glutamine + ATP + H2O = L-glutaminyl-tRNA(Gln) + L-glutamate + ADP + phosphate + H(+). It catalyses the reaction L-aspartyl-tRNA(Asn) + L-glutamine + ATP + H2O = L-asparaginyl-tRNA(Asn) + L-glutamate + ADP + phosphate + 2 H(+). Its function is as follows. Allows the formation of correctly charged Asn-tRNA(Asn) or Gln-tRNA(Gln) through the transamidation of misacylated Asp-tRNA(Asn) or Glu-tRNA(Gln) in organisms which lack either or both of asparaginyl-tRNA or glutaminyl-tRNA synthetases. The reaction takes place in the presence of glutamine and ATP through an activated phospho-Asp-tRNA(Asn) or phospho-Glu-tRNA(Gln). The protein is Aspartyl/glutamyl-tRNA(Asn/Gln) amidotransferase subunit C of Clostridium botulinum (strain Loch Maree / Type A3).